Consider the following 362-residue polypeptide: Phospho-N-acetylmuramoyl-pentapeptide-transferase (362 aa).

10 helical membrane passes run 28–48, 75–95, 100–120, 134–154, 170–190, 201–221, 241–261, 265–285, 290–310, and 339–359; these read GAVL…IAWL, TMGG…WADL, VWIV…DDYL, AKLV…WSLQ, VLLQ…VGAG, GLAI…SYLV, LAVF…FNAP, VFMG…ISVV, LVLG…IVQV, and TVVI…LATL.

The protein belongs to the glycosyltransferase 4 family. MraY subfamily. The cofactor is Mg(2+).

The protein localises to the cell inner membrane. It carries out the reaction UDP-N-acetyl-alpha-D-muramoyl-L-alanyl-gamma-D-glutamyl-meso-2,6-diaminopimeloyl-D-alanyl-D-alanine + di-trans,octa-cis-undecaprenyl phosphate = di-trans,octa-cis-undecaprenyl diphospho-N-acetyl-alpha-D-muramoyl-L-alanyl-D-glutamyl-meso-2,6-diaminopimeloyl-D-alanyl-D-alanine + UMP. Its pathway is cell wall biogenesis; peptidoglycan biosynthesis. Catalyzes the initial step of the lipid cycle reactions in the biosynthesis of the cell wall peptidoglycan: transfers peptidoglycan precursor phospho-MurNAc-pentapeptide from UDP-MurNAc-pentapeptide onto the lipid carrier undecaprenyl phosphate, yielding undecaprenyl-pyrophosphoryl-MurNAc-pentapeptide, known as lipid I. The polypeptide is Phospho-N-acetylmuramoyl-pentapeptide-transferase (Paramagnetospirillum magneticum (strain ATCC 700264 / AMB-1) (Magnetospirillum magneticum)).